Here is a 239-residue protein sequence, read N- to C-terminus: Protein GrpE (239 aa).

Disordered stretches follow at residues 1–60 (MIEN…SNND) and 208–239 (SMGPGKQKSQQEVEKDTVEGDVDSDANTSEDV). A compositionally biased stretch (polar residues) spans 28–42 (SMQNSTTENDELSSQ). Basic and acidic residues-rich tracts occupy residues 43-53 (KTEEINTEELK) and 216-225 (SQQEVEKDTV). Over residues 226 to 239 (EGDVDSDANTSEDV) the composition is skewed to acidic residues.

The protein belongs to the GrpE family. As to quaternary structure, homodimer.

The protein localises to the cytoplasm. Participates actively in the response to hyperosmotic and heat shock by preventing the aggregation of stress-denatured proteins, in association with DnaK and GrpE. It is the nucleotide exchange factor for DnaK and may function as a thermosensor. Unfolded proteins bind initially to DnaJ; upon interaction with the DnaJ-bound protein, DnaK hydrolyzes its bound ATP, resulting in the formation of a stable complex. GrpE releases ADP from DnaK; ATP binding to DnaK triggers the release of the substrate protein, thus completing the reaction cycle. Several rounds of ATP-dependent interactions between DnaJ, DnaK and GrpE are required for fully efficient folding. The protein is Protein GrpE of Prochlorococcus marinus (strain MIT 9301).